The primary structure comprises 531 residues: Peroxinectin A (531 aa).

The signal sequence occupies residues 1–21 (MRLNLISFFIIFTILVSISNS). Residue N62 is glycosylated (N-linked (GlcNAc...) asparagine). H101 (proton acceptor) is an active-site residue. 2 N-linked (GlcNAc...) asparagine glycosylation sites follow: N131 and N338.

The protein belongs to the peroxidase family.

It localises to the secreted. The enzyme catalyses 2 a phenolic donor + H2O2 = 2 a phenolic radical donor + 2 H2O. The polypeptide is Peroxinectin A (poxA) (Dictyostelium discoideum (Social amoeba)).